A 140-amino-acid polypeptide reads, in one-letter code: Large ribosomal subunit protein uL14 (140 aa).

At serine 17 the chain carries Phosphoserine. Residue tyrosine 38 is modified to Phosphotyrosine.

It belongs to the universal ribosomal protein uL14 family. As to quaternary structure, component of the large ribosomal subunit.

Its subcellular location is the cytoplasm. In terms of biological role, component of the large ribosomal subunit. The ribosome is a large ribonucleoprotein complex responsible for the synthesis of proteins in the cell. In Canis lupus familiaris (Dog), this protein is Large ribosomal subunit protein uL14 (RPL23).